A 561-amino-acid chain; its full sequence is Long-chain-fatty-acid--CoA ligase (561 aa).

Position 213–224 (213–224 (YTGGTTGVAKGA)) interacts with ATP.

Belongs to the ATP-dependent AMP-binding enzyme family. It depends on Mg(2+) as a cofactor.

Its subcellular location is the membrane. It carries out the reaction a long-chain fatty acid + ATP + CoA = a long-chain fatty acyl-CoA + AMP + diphosphate. It functions in the pathway lipid metabolism; fatty acid beta-oxidation. Catalyzes the esterification, concomitant with transport, of exogenous long-chain fatty acids into metabolically active CoA thioesters for subsequent degradation or incorporation into phospholipids. In Escherichia coli O157:H7, this protein is Long-chain-fatty-acid--CoA ligase (fadD).